Consider the following 204-residue polypeptide: N-(5'-phosphoribosyl)anthranilate isomerase (204 aa).

Belongs to the TrpF family.

The enzyme catalyses N-(5-phospho-beta-D-ribosyl)anthranilate = 1-(2-carboxyphenylamino)-1-deoxy-D-ribulose 5-phosphate. Its pathway is amino-acid biosynthesis; L-tryptophan biosynthesis; L-tryptophan from chorismate: step 3/5. The protein is N-(5'-phosphoribosyl)anthranilate isomerase of Bacillus cereus (strain AH187).